A 135-amino-acid polypeptide reads, in one-letter code: Early nodulin-5 (135 aa).

A signal peptide spans 1 to 23 (MASSSSPIFLMIIFSMWLLFSYS).

As to expression, invasion zone and early symbiotic zone.

Functionally, involved in the infection process during the plant-rhizobium interaction. This is Early nodulin-5 (ENOD5) from Pisum sativum (Garden pea).